A 386-amino-acid polypeptide reads, in one-letter code: Formate-dependent phosphoribosylglycinamide formyltransferase (386 aa).

N(1)-(5-phospho-beta-D-ribosyl)glycinamide-binding positions include 15–16 (EL) and Glu75. ATP contacts are provided by residues Arg107, Lys148, 153 to 158 (SSGKGQ), 188 to 191 (EQFI), and Glu196. The ATP-grasp domain occupies 112–301 (ALAAQQLNLQ…EFELHLRAIV (190 aa)). 2 residues coordinate Mg(2+): Glu260 and Glu272. N(1)-(5-phospho-beta-D-ribosyl)glycinamide contacts are provided by residues Asp279, Lys349, and 356-357 (RR).

Belongs to the PurK/PurT family. In terms of assembly, homodimer.

The catalysed reaction is N(1)-(5-phospho-beta-D-ribosyl)glycinamide + formate + ATP = N(2)-formyl-N(1)-(5-phospho-beta-D-ribosyl)glycinamide + ADP + phosphate + H(+). The protein operates within purine metabolism; IMP biosynthesis via de novo pathway; N(2)-formyl-N(1)-(5-phospho-D-ribosyl)glycinamide from N(1)-(5-phospho-D-ribosyl)glycinamide (formate route): step 1/1. Functionally, involved in the de novo purine biosynthesis. Catalyzes the transfer of formate to 5-phospho-ribosyl-glycinamide (GAR), producing 5-phospho-ribosyl-N-formylglycinamide (FGAR). Formate is provided by PurU via hydrolysis of 10-formyl-tetrahydrofolate. The polypeptide is Formate-dependent phosphoribosylglycinamide formyltransferase (Francisella tularensis subsp. tularensis (strain SCHU S4 / Schu 4)).